Reading from the N-terminus, the 322-residue chain is Pantothenate kinase (322 aa).

100 to 107 provides a ligand contact to ATP; that stretch reads GSVAVGKS.

This sequence belongs to the prokaryotic pantothenate kinase family.

The protein resides in the cytoplasm. It carries out the reaction (R)-pantothenate + ATP = (R)-4'-phosphopantothenate + ADP + H(+). It functions in the pathway cofactor biosynthesis; coenzyme A biosynthesis; CoA from (R)-pantothenate: step 1/5. The polypeptide is Pantothenate kinase (Brucella canis (strain ATCC 23365 / NCTC 10854 / RM-666)).